A 68-amino-acid polypeptide reads, in one-letter code: Protein SlyX homolog (68 aa).

It belongs to the SlyX family.

This Ectopseudomonas mendocina (strain ymp) (Pseudomonas mendocina) protein is Protein SlyX homolog.